The following is a 565-amino-acid chain: NAD-dependent malic enzyme (565 aa).

Tyr104 (proton donor) is an active-site residue. An NAD(+)-binding site is contributed by Arg157. Lys175 (proton acceptor) is an active-site residue. A divalent metal cation contacts are provided by Glu246, Asp247, and Asp270. The NAD(+) site is built by Asp270 and Asn418.

It belongs to the malic enzymes family. As to quaternary structure, homotetramer. Mg(2+) serves as cofactor. Mn(2+) is required as a cofactor.

It catalyses the reaction (S)-malate + NAD(+) = pyruvate + CO2 + NADH. The catalysed reaction is oxaloacetate + H(+) = pyruvate + CO2. The chain is NAD-dependent malic enzyme from Serratia proteamaculans (strain 568).